The chain runs to 315 residues: Methionyl-tRNA formyltransferase (315 aa).

113–116 (SLLP) contributes to the (6S)-5,6,7,8-tetrahydrofolate binding site.

This sequence belongs to the Fmt family.

The catalysed reaction is L-methionyl-tRNA(fMet) + (6R)-10-formyltetrahydrofolate = N-formyl-L-methionyl-tRNA(fMet) + (6S)-5,6,7,8-tetrahydrofolate + H(+). Attaches a formyl group to the free amino group of methionyl-tRNA(fMet). The formyl group appears to play a dual role in the initiator identity of N-formylmethionyl-tRNA by promoting its recognition by IF2 and preventing the misappropriation of this tRNA by the elongation apparatus. In Pseudoalteromonas atlantica (strain T6c / ATCC BAA-1087), this protein is Methionyl-tRNA formyltransferase.